A 297-amino-acid chain; its full sequence is N-acetylmuramic acid 6-phosphate etherase (297 aa).

The 164-residue stretch at 55 to 218 folds into the SIS domain; it reads AAKRYSKGGR…STGVMIKQGK (164 aa). Glutamate 83 serves as the catalytic Proton donor. Residue glutamate 114 is part of the active site.

The protein belongs to the GCKR-like family. MurNAc-6-P etherase subfamily. Homodimer.

The catalysed reaction is N-acetyl-D-muramate 6-phosphate + H2O = N-acetyl-D-glucosamine 6-phosphate + (R)-lactate. It functions in the pathway amino-sugar metabolism; N-acetylmuramate degradation. Specifically catalyzes the cleavage of the D-lactyl ether substituent of MurNAc 6-phosphate, producing GlcNAc 6-phosphate and D-lactate. This is N-acetylmuramic acid 6-phosphate etherase from Lactobacillus gasseri (strain ATCC 33323 / DSM 20243 / BCRC 14619 / CIP 102991 / JCM 1131 / KCTC 3163 / NCIMB 11718 / NCTC 13722 / AM63).